Reading from the N-terminus, the 185-residue chain is Elongation factor P (185 aa).

Belongs to the elongation factor P family.

It is found in the cytoplasm. Its pathway is protein biosynthesis; polypeptide chain elongation. Involved in peptide bond synthesis. Stimulates efficient translation and peptide-bond synthesis on native or reconstituted 70S ribosomes in vitro. Probably functions indirectly by altering the affinity of the ribosome for aminoacyl-tRNA, thus increasing their reactivity as acceptors for peptidyl transferase. This Nitratidesulfovibrio vulgaris (strain DP4) (Desulfovibrio vulgaris) protein is Elongation factor P.